Here is a 382-residue protein sequence, read N- to C-terminus: Mannitol-1-phosphate 5-dehydrogenase (382 aa).

3–14 (AVHFGAGNIGRG) contacts NAD(+).

Belongs to the mannitol dehydrogenase family.

The enzyme catalyses D-mannitol 1-phosphate + NAD(+) = beta-D-fructose 6-phosphate + NADH + H(+). The polypeptide is Mannitol-1-phosphate 5-dehydrogenase (Exiguobacterium sp. (strain ATCC BAA-1283 / AT1b)).